The following is a 481-amino-acid chain: Beta-1,3-glucan-binding protein (481 aa).

Positions 1–17 are cleaved as a signal peptide; that stretch reads MKVLVVFIFCLVRSTFG. The CBM39 domain maps to 19-123; sequence FEVPDALVEV…QKFVVKQLLD (105 aa). In terms of domain architecture, GH16 spans 211 to 481; the sequence is HRLTIRPVPS…EVDYVKVSAL (271 aa). N467 carries an N-linked (GlcNAc...) asparagine glycan.

Belongs to the insect beta-1,3-glucan binding protein family. The N-terminus is blocked. Hemolymph.

Its subcellular location is the secreted. In terms of biological role, involved in the recognition of invading microorganisms. Binds specifically to beta-1,3-glucan and activates the phenoloxidase cascade. In Tenebrio molitor (Yellow mealworm beetle), this protein is Beta-1,3-glucan-binding protein (GRP).